Consider the following 277-residue polypeptide: Large ribosomal subunit protein uL2 (277 aa).

Disordered regions lie at residues 1 to 20, 27 to 55, and 207 to 277; these read MGIR…SVSD, TQPE…RHRG, and KAGR…RNQS. Over residues 27 to 48 the composition is skewed to polar residues; that stretch reads TQPEKSLTTYKHSSQGRNNRGV. Composition is skewed to basic residues over residues 207–220 and 259–277; these read KAGR…RPHV and TRNR…RNQS.

It belongs to the universal ribosomal protein uL2 family. In terms of assembly, part of the 50S ribosomal subunit. Forms a bridge to the 30S subunit in the 70S ribosome.

Functionally, one of the primary rRNA binding proteins. Required for association of the 30S and 50S subunits to form the 70S ribosome, for tRNA binding and peptide bond formation. It has been suggested to have peptidyltransferase activity; this is somewhat controversial. Makes several contacts with the 16S rRNA in the 70S ribosome. The sequence is that of Large ribosomal subunit protein uL2 from Gloeothece citriformis (strain PCC 7424) (Cyanothece sp. (strain PCC 7424)).